Reading from the N-terminus, the 135-residue chain is Large ribosomal subunit protein uL16c (135 aa).

Belongs to the universal ribosomal protein uL16 family. As to quaternary structure, part of the 50S ribosomal subunit.

Its subcellular location is the plastid. It is found in the chloroplast. This chain is Large ribosomal subunit protein uL16c, found in Gossypium hirsutum (Upland cotton).